We begin with the raw amino-acid sequence, 488 residues long: 1-hydroxycarotenoid 3,4-desaturase (488 aa).

FAD contacts are provided by residues glutamate 31, lysine 39, 55–56 (SL), valine 247, asparagine 275, leucine 431, glycine 461, and 468–469 (GI).

This sequence belongs to the carotenoid/retinoid oxidoreductase family. Monomer.

The catalysed reaction is rhodopin + A = (3E)-3,4-didehydrorhodopin + AH2. The enzyme catalyses 1'-hydroxy-gamma-carotene + A = 1'-hydroxytorulene + AH2. It carries out the reaction 1-hydroxy-all-trans-1,2-dihydro-neurosporene + A = demethylspheroidene + AH2. It catalyses the reaction 1,1'-dihydroxy-1,1',2,2'-tetrahydroneurosporene + A = 1'-hydroxy-demethylspheroidene + AH2. The catalysed reaction is 1,1'-dihydroxy-1,1',2,2'-tetrahydrolycopene + A = 1,1'-dihydroxy-3,4-didehydro-1,2-dihydrolycopene + AH2. It functions in the pathway carotenoid biosynthesis. In terms of biological role, catalyzes the introduction of a C-3,4 double bond into 1'-hydroxy-gamma-carotene and rhodopin (1-hydroxylycopene) to yield 1'-hydroxytorulene and (3E)-3,4-didehydrorhodopin, respectively. Can also 1-hydroxy-all-trans-1,2-dihydro-neurosporene, 1,1'-dihydroxy-1,1',2,2'-tetrahydroneurosporene and 1,1'-dihydroxy-1,1',2,2'-tetrahydrolycopene. Probably involved in the synthesis of myxol, a gamma-carotene derivative. May use FAD as a proton acceptor. This Flavobacterium sp. (strain P99-3) protein is 1-hydroxycarotenoid 3,4-desaturase.